A 1002-amino-acid chain; its full sequence is UPF0182 protein alr1037 (1002 aa).

A run of 9 helical transmembrane segments spans residues 7-29, 49-71, 123-145, 178-200, 202-224, 258-280, 300-319, 339-361, and 382-404; these read FRLSIVFVGLWLLLDLSSRLGAE, RGVLWVVAAGVTAVYLWGNLALA, LRWLLPLAFVFSLLAGLILVHYG, QVFSQVLYLGLIVGIAIAILIYS, FFLRAIAVVLSVVFGTILFYNWA, LLELWLMGMFLYGFIAVTLTYLL, HLYGMGGLLMLMVAFSYWLS, VVVQLPIYNILCVLGLAIAFYLL, and GAYLFVVVAAGSVLPTIVQYLIV.

The protein belongs to the UPF0182 family.

The protein resides in the cell membrane. This is UPF0182 protein alr1037 from Nostoc sp. (strain PCC 7120 / SAG 25.82 / UTEX 2576).